The sequence spans 184 residues: Threonylcarbamoyl-AMP synthase (184 aa).

The 182-residue stretch at 3 to 184 (AWFIQKAVSV…DAATGAILRQ (182 aa)) folds into the YrdC-like domain.

It belongs to the SUA5 family. TsaC subfamily.

The protein localises to the cytoplasm. The enzyme catalyses L-threonine + hydrogencarbonate + ATP = L-threonylcarbamoyladenylate + diphosphate + H2O. Required for the formation of a threonylcarbamoyl group on adenosine at position 37 (t(6)A37) in tRNAs that read codons beginning with adenine. Catalyzes the conversion of L-threonine, HCO(3)(-)/CO(2) and ATP to give threonylcarbamoyl-AMP (TC-AMP) as the acyladenylate intermediate, with the release of diphosphate. The chain is Threonylcarbamoyl-AMP synthase from Hahella chejuensis (strain KCTC 2396).